Consider the following 207-residue polypeptide: ATP-dependent dethiobiotin synthetase BioD (207 aa).

Position 13 to 18 (13 to 18 (EVGKTV)) interacts with ATP. Threonine 17 is a Mg(2+) binding site. Residue lysine 33 is part of the active site. Residues aspartate 44 and 100 to 103 (EGAG) contribute to the ATP site. Mg(2+)-binding residues include aspartate 44 and glutamate 100.

Belongs to the dethiobiotin synthetase family. As to quaternary structure, homodimer. Requires Mg(2+) as cofactor.

Its subcellular location is the cytoplasm. The enzyme catalyses (7R,8S)-7,8-diammoniononanoate + CO2 + ATP = (4R,5S)-dethiobiotin + ADP + phosphate + 3 H(+). Its pathway is cofactor biosynthesis; biotin biosynthesis; biotin from 7,8-diaminononanoate: step 1/2. Catalyzes a mechanistically unusual reaction, the ATP-dependent insertion of CO2 between the N7 and N8 nitrogen atoms of 7,8-diaminopelargonic acid (DAPA, also called 7,8-diammoniononanoate) to form a ureido ring. The sequence is that of ATP-dependent dethiobiotin synthetase BioD from Christiangramia forsetii (strain DSM 17595 / CGMCC 1.15422 / KT0803) (Gramella forsetii).